The sequence spans 251 residues: Insertion sequence IS5376 putative ATP-binding protein (251 aa).

105 to 112 is a binding site for ATP; sequence GPPGIGKT.

The protein belongs to the IS21/IS1162 putative ATP-binding protein family.

The sequence is that of Insertion sequence IS5376 putative ATP-binding protein from Geobacillus stearothermophilus (Bacillus stearothermophilus).